Consider the following 505-residue polypeptide: Deoxyguanosinetriphosphate triphosphohydrolase (505 aa).

The region spanning 66–273 (RLTHSMEVQQ…MEAADDISYC (208 aa)) is the HD domain.

The protein belongs to the dGTPase family. Type 1 subfamily. As to quaternary structure, homotetramer. Requires Mg(2+) as cofactor.

The enzyme catalyses dGTP + H2O = 2'-deoxyguanosine + triphosphate + H(+). Functionally, dGTPase preferentially hydrolyzes dGTP over the other canonical NTPs. This Shigella flexneri protein is Deoxyguanosinetriphosphate triphosphohydrolase.